Reading from the N-terminus, the 279-residue chain is MSYTDTVLSSLKLGQKTEYTGEYDPTLLQAVPRKLNRDHLGITEQQPFNQGADVWTCYEVSWLNLNGLPQVAIAEVVIDANSENLIESKSFKLYLNSVNQTTFESLEQVEYIIESDLSRCACGLVWVKIHKLSEYKNEIIADFSGECIDEQDIEIDNYQYSAQYLEHSAEGEEVEETLVSHLLKSNCLITSQPDWGSVQIHYVGKKINREKLLRYLVSFREHNEFHEQCVERIFTDLMTFAKPEKLMVYARYTRRGGLEINPFRANFDAMPQHIRMARQ.

Residue 86–88 (IES) coordinates substrate. 88–89 (SK) contacts NADPH. The Thioimide intermediate role is filled by Cys-187. Residue Asp-194 is the Proton donor of the active site. A substrate-binding site is contributed by 226 to 227 (HE). 255-256 (RG) contacts NADPH.

The protein belongs to the GTP cyclohydrolase I family. QueF type 2 subfamily. As to quaternary structure, homodimer.

It is found in the cytoplasm. It catalyses the reaction 7-aminomethyl-7-carbaguanine + 2 NADP(+) = 7-cyano-7-deazaguanine + 2 NADPH + 3 H(+). Its pathway is tRNA modification; tRNA-queuosine biosynthesis. Catalyzes the NADPH-dependent reduction of 7-cyano-7-deazaguanine (preQ0) to 7-aminomethyl-7-deazaguanine (preQ1). This is NADPH-dependent 7-cyano-7-deazaguanine reductase from Haemophilus ducreyi (strain 35000HP / ATCC 700724).